Consider the following 24-residue polypeptide: Brevinin-1JDb (24 aa).

A disulfide bridge links Cys-18 with Cys-24.

In terms of tissue distribution, expressed by the skin glands.

Its subcellular location is the secreted. Has antibacterial activity against E.coli and S.aureus strains. Has antifungal activity against C.albicans. Has hemolytic activity against rabbit erythrocytes. The chain is Brevinin-1JDb from Odorrana jingdongensis (Jingdong frog).